Reading from the N-terminus, the 398-residue chain is Deoxyguanosinetriphosphate triphosphohydrolase-like protein (398 aa).

The HD domain occupies 68 to 215 (RLTHTLEVAQ…AAISDDIAYD (148 aa)).

This sequence belongs to the dGTPase family. Type 2 subfamily.

The protein is Deoxyguanosinetriphosphate triphosphohydrolase-like protein of Azorhizobium caulinodans (strain ATCC 43989 / DSM 5975 / JCM 20966 / LMG 6465 / NBRC 14845 / NCIMB 13405 / ORS 571).